The chain runs to 383 residues: MEEFQGPEPRGQMMSENPRSLELNQRKWWISVFICGFLIFAGDSLVMLLLNFFYVQDNRSESDQDRQYKGTWTQALIQNAAFPILIPFFFILSSPKPNPETVSNQTNNGWFRVLSLYVSLGVLVSVYSKLYALGKLYVGWGILLSTQLILTSLFSAFINRLKFNRWIIISIIFTLGADFFGGPAFAGTPNEDETDPYDIKAWLILIFPTLAFSLSLCLMQLGFDKVLVKTKRYGNKKVFRMVLEMQICVSFIATLICTVGLFASGEFKELKGDSERFKKGKTYYILSLVGLALSWQVWAVGLLGLVLLVSGLFADVVHMGASPVVALLVVLAFDFMDDEFGWQRRGALLGAVLALASYFYSLHTKKKKEIAELNKRENNNSEA.

10 consecutive transmembrane segments (helical) span residues 30 to 50 (ISVF…MLLL), 72 to 92 (WTQA…FFIL), 113 to 133 (VLSL…LYAL), 138 to 158 (VGWG…SAFI), 166 to 186 (WIII…PAFA), 203 to 223 (LILI…QLGF), 247 to 267 (ICVS…SGEF), 297 to 317 (VWAV…ADVV), 322 to 342 (SPVV…EFGW), and 346 to 363 (GALL…YSLH).

The protein belongs to the purine permeases (TC 2.A.7.14) family.

The protein resides in the membrane. This chain is Probable purine permease 16 (PUP16), found in Arabidopsis thaliana (Mouse-ear cress).